Reading from the N-terminus, the 575-residue chain is MISGILASPGIAFGKALVLKEEKIVLDTQKITDDQIDAEVARFYEGRNAAVEQLNSIRERALISLGEEKAAIFEGHLMILEDEELEEEILDYLRSNKVNAGVAASKILDQQVTMLSEIDDEYLKERAGDIRDIANRLVKNILGMYIVDLGDIQEESILVAYDLTPSETAQLNLEKVLGVVTDIGGRTSHTSIMARSLELPAIVGTNKVTKLVNTGDYLILDAINNQVYINPTASQIDELKALEAKISEEKAELAKLKDLPAITLDGHKVDVVANIGTIRDCDGAERNGAEGIGLYRTEFLFMDREQLPTEEEQFIAYKQVVEAMNGRLTVIRTMDIGGDKELSYLDLPKEMNPFLGWRAIRIALDRREILNAQLRAVLRASAFGKLAVMFPMIISVEEIRELKAVIETLKAELREEGRLFDNNIQVGVMVETPSAAVNAKFLAKEVDFFSIGTNDLTQYTLAVDRGNEFISHLYNPMHPSVLGLIKQVIDASHAEGKWTGMCGELAGDERATLLLLGMGLDEFSMSAISVPRIKKLIRNVNFQDAKVLADTALQKPTAAEIDQLIEEFLLENSLN.

The active-site Tele-phosphohistidine intermediate is His-189. Positions 296 and 332 each coordinate phosphoenolpyruvate. Positions 431 and 455 each coordinate Mg(2+). Residues 454–455 (ND) and Arg-465 each bind phosphoenolpyruvate. Cys-502 functions as the Proton donor in the catalytic mechanism.

It belongs to the PEP-utilizing enzyme family. Homodimer. The cofactor is Mg(2+).

The protein localises to the cytoplasm. It carries out the reaction L-histidyl-[protein] + phosphoenolpyruvate = N(pros)-phospho-L-histidyl-[protein] + pyruvate. In terms of biological role, general (non sugar-specific) component of the phosphoenolpyruvate-dependent sugar phosphotransferase system (sugar PTS). This major carbohydrate active-transport system catalyzes the phosphorylation of incoming sugar substrates concomitantly with their translocation across the cell membrane. Enzyme I transfers the phosphoryl group from phosphoenolpyruvate (PEP) to the phosphoryl carrier protein (HPr). In Haemophilus influenzae (strain ATCC 51907 / DSM 11121 / KW20 / Rd), this protein is Phosphoenolpyruvate-protein phosphotransferase (ptsI).